Here is a 177-residue protein sequence, read N- to C-terminus: ATP synthase subunit delta (177 aa).

The protein belongs to the ATPase delta chain family. F-type ATPases have 2 components, F(1) - the catalytic core - and F(0) - the membrane proton channel. F(1) has five subunits: alpha(3), beta(3), gamma(1), delta(1), epsilon(1). F(0) has three main subunits: a(1), b(2) and c(10-14). The alpha and beta chains form an alternating ring which encloses part of the gamma chain. F(1) is attached to F(0) by a central stalk formed by the gamma and epsilon chains, while a peripheral stalk is formed by the delta and b chains.

It localises to the cell inner membrane. F(1)F(0) ATP synthase produces ATP from ADP in the presence of a proton or sodium gradient. F-type ATPases consist of two structural domains, F(1) containing the extramembraneous catalytic core and F(0) containing the membrane proton channel, linked together by a central stalk and a peripheral stalk. During catalysis, ATP synthesis in the catalytic domain of F(1) is coupled via a rotary mechanism of the central stalk subunits to proton translocation. Its function is as follows. This protein is part of the stalk that links CF(0) to CF(1). It either transmits conformational changes from CF(0) to CF(1) or is implicated in proton conduction. The chain is ATP synthase subunit delta from Flavobacterium johnsoniae (strain ATCC 17061 / DSM 2064 / JCM 8514 / BCRC 14874 / CCUG 350202 / NBRC 14942 / NCIMB 11054 / UW101) (Cytophaga johnsonae).